The following is a 303-amino-acid chain: Dihydroorotate dehydrogenase B (NAD(+)), catalytic subunit (303 aa).

Residues serine 21 and 45-46 (KG) contribute to the FMN site. Substrate contacts are provided by residues lysine 45 and 69–73 (NAVGL). FMN-binding residues include asparagine 99 and asparagine 127. Asparagine 127 is a substrate binding site. The active-site Nucleophile is the cysteine 130. FMN is bound by residues lysine 165 and isoleucine 191. 192 to 193 (NT) serves as a coordination point for substrate. FMN is bound by residues glycine 217, 243–244 (GG), and 265–266 (GT).

This sequence belongs to the dihydroorotate dehydrogenase family. Type 1 subfamily. In terms of assembly, heterotetramer of 2 PyrK and 2 PyrD type B subunits. It depends on FMN as a cofactor.

The protein localises to the cytoplasm. It carries out the reaction (S)-dihydroorotate + NAD(+) = orotate + NADH + H(+). Its pathway is pyrimidine metabolism; UMP biosynthesis via de novo pathway; orotate from (S)-dihydroorotate (NAD(+) route): step 1/1. Its function is as follows. Catalyzes the conversion of dihydroorotate to orotate with NAD(+) as electron acceptor. The sequence is that of Dihydroorotate dehydrogenase B (NAD(+)), catalytic subunit (pyrD) from Bacteroides fragilis (strain ATCC 25285 / DSM 2151 / CCUG 4856 / JCM 11019 / LMG 10263 / NCTC 9343 / Onslow / VPI 2553 / EN-2).